We begin with the raw amino-acid sequence, 101 residues long: MSQQERLLKVLKAPHISEKATNNAEKSNTIVFKVALDANKVEIANAVAQLFEVKVDSVRTVVVKGKTKRHGAKTGRRSDWKKAYVTLAEGQELDFVEGAAE.

It belongs to the universal ribosomal protein uL23 family. In terms of assembly, part of the 50S ribosomal subunit. Contacts protein L29, and trigger factor when it is bound to the ribosome.

Functionally, one of the early assembly proteins it binds 23S rRNA. One of the proteins that surrounds the polypeptide exit tunnel on the outside of the ribosome. Forms the main docking site for trigger factor binding to the ribosome. This chain is Large ribosomal subunit protein uL23, found in Mannheimia succiniciproducens (strain KCTC 0769BP / MBEL55E).